A 157-amino-acid polypeptide reads, in one-letter code: Transcription inhibitor protein Gfh1 (157 aa).

Positions 1 to 74 (MAREVKLTKA…LEDVLSRAVI (74 aa)) form a coiled coil.

This sequence belongs to the GreA/GreB family. As to quaternary structure, interacts with RNAP.

Inhibits all catalytic activities of RNA polymerase (RNAP) by partially occluding its substrate-binding site and preventing NTP binding. The sequence is that of Transcription inhibitor protein Gfh1 (gfh1) from Thermus aquaticus.